We begin with the raw amino-acid sequence, 263 residues long: uncharacterized protein (263 aa).

Residue 31 to 38 participates in ATP binding; it reads GPTGSGKT.

The protein belongs to the CbbQ/NirQ/NorQ/GpvN family.

This is an uncharacterized protein from Staphylococcus epidermidis (strain ATCC 35984 / DSM 28319 / BCRC 17069 / CCUG 31568 / BM 3577 / RP62A).